A 104-amino-acid chain; its full sequence is Large ribosomal subunit protein uL24 (104 aa).

It belongs to the universal ribosomal protein uL24 family. As to quaternary structure, part of the 50S ribosomal subunit.

One of two assembly initiator proteins, it binds directly to the 5'-end of the 23S rRNA, where it nucleates assembly of the 50S subunit. In terms of biological role, one of the proteins that surrounds the polypeptide exit tunnel on the outside of the subunit. This is Large ribosomal subunit protein uL24 from Corynebacterium aurimucosum (strain ATCC 700975 / DSM 44827 / CIP 107346 / CN-1) (Corynebacterium nigricans).